The primary structure comprises 200 residues: Nascent polypeptide-associated complex subunit alpha (200 aa).

Positions 1 to 19 (MADPRVEELPEEEVKKTQV) are enriched in basic and acidic residues. 2 disordered regions span residues 1 to 54 (MADP…NEKK) and 118 to 165 (AAQQ…EDKD). The segment covering 20 to 34 (EDLDNSSDDESDIEA) has biased composition (acidic residues). The NAC-A/B domain maps to 49–114 (SRNEKKARKA…AKIEDLNASA (66 aa)). Over residues 127 to 146 (AEHDHAGHTHEHEEAGKAKE) the composition is skewed to basic and acidic residues. Residues 147–160 (EEEEDEGEEVDAEG) are compositionally biased toward acidic residues. The 40-residue stretch at 161-200 (IEDKDIELVMTQANVSRKKAIKALKENDNDIVNSIMALSI) folds into the UBA domain.

The protein belongs to the NAC-alpha family. In terms of assembly, part of the nascent polypeptide-associated complex (NAC), consisting of npc-1/egd2 and npc-2/egd1. NAC associates with ribosomes via npc-2/egd1.

The protein localises to the cytoplasm. Its subcellular location is the nucleus. Component of the nascent polypeptide-associated complex (NAC), a dynamic component of the ribosomal exit tunnel, protecting the emerging polypeptides from interaction with other cytoplasmic proteins to ensure appropriate nascent protein targeting. The NAC complex also promotes mitochondrial protein import by enhancing productive ribosome interactions with the outer mitochondrial membrane and blocks the inappropriate interaction of ribosomes translating non-secretory nascent polypeptides with translocation sites in the membrane of the endoplasmic reticulum. Npc-1/egd2 may also be involved in transcription regulation. The sequence is that of Nascent polypeptide-associated complex subunit alpha (npc-1) from Neurospora crassa (strain ATCC 24698 / 74-OR23-1A / CBS 708.71 / DSM 1257 / FGSC 987).